Here is an 85-residue protein sequence, read N- to C-terminus: Large ribosomal subunit protein bL27 (85 aa).

Residues 1–21 are disordered; the sequence is MAHKKGVGSTRNGRDSESKRL.

The protein belongs to the bacterial ribosomal protein bL27 family.

This chain is Large ribosomal subunit protein bL27, found in Geobacter sulfurreducens (strain ATCC 51573 / DSM 12127 / PCA).